A 285-amino-acid polypeptide reads, in one-letter code: Pantothenate synthetase (285 aa).

30-37 serves as a coordination point for ATP; it reads MGFLHEGH. Residue histidine 37 is the Proton donor of the active site. Glutamine 61 serves as a coordination point for (R)-pantoate. Residue glutamine 61 participates in beta-alanine binding. 147-150 is an ATP binding site; the sequence is GQKD. Glutamine 153 serves as a coordination point for (R)-pantoate. ATP is bound by residues valine 176 and 184 to 187; that span reads KSSR.

This sequence belongs to the pantothenate synthetase family. Homodimer.

The protein localises to the cytoplasm. It catalyses the reaction (R)-pantoate + beta-alanine + ATP = (R)-pantothenate + AMP + diphosphate + H(+). Its pathway is cofactor biosynthesis; (R)-pantothenate biosynthesis; (R)-pantothenate from (R)-pantoate and beta-alanine: step 1/1. Its function is as follows. Catalyzes the condensation of pantoate with beta-alanine in an ATP-dependent reaction via a pantoyl-adenylate intermediate. In Listeria monocytogenes serovar 1/2a (strain ATCC BAA-679 / EGD-e), this protein is Pantothenate synthetase.